A 508-amino-acid polypeptide reads, in one-letter code: Proline--tRNA ligase 2 (508 aa).

The protein belongs to the class-II aminoacyl-tRNA synthetase family. ProS type 3 subfamily. As to quaternary structure, homodimer.

It is found in the cytoplasm. The enzyme catalyses tRNA(Pro) + L-proline + ATP = L-prolyl-tRNA(Pro) + AMP + diphosphate. Catalyzes the attachment of proline to tRNA(Pro) in a two-step reaction: proline is first activated by ATP to form Pro-AMP and then transferred to the acceptor end of tRNA(Pro). The sequence is that of Proline--tRNA ligase 2 from Bacillus anthracis.